Reading from the N-terminus, the 152-residue chain is UPF0756 membrane protein Moth_1009 (152 aa).

The next 4 membrane-spanning stretches (helical) occupy residues 5 to 25, 41 to 61, 75 to 95, and 117 to 137; these read LIILAVLVVAVLGRANTVALA, IFPFIEKGGTFWGLVLLIAAI, LGHVFLSWVGLSAFILSLITT, and LILGAVIAAAFLGGVPVGPFI.

Belongs to the UPF0756 family.

It is found in the cell membrane. In Moorella thermoacetica (strain ATCC 39073 / JCM 9320), this protein is UPF0756 membrane protein Moth_1009.